The following is a 223-amino-acid chain: Holliday junction branch migration complex subunit RuvA (223 aa).

The segment at 1–64 (MIGRIAGVIL…EDLLQLFGFP (64 aa)) is domain I. Residues 65–143 (TLLEKEWHRL…AVMALGGALT (79 aa)) form a domain II region. The flexible linker stretch occupies residues 144–169 (VDPGPLPEVELVEAAVPAPVPAKAAP). The tract at residues 170-223 (SSAQATADALSALGNLGYAPSEAASAVAEAAAREPAAPTAALIRAALRLLAPKE) is domain III.

The protein belongs to the RuvA family. In terms of assembly, homotetramer. Forms an RuvA(8)-RuvB(12)-Holliday junction (HJ) complex. HJ DNA is sandwiched between 2 RuvA tetramers; dsDNA enters through RuvA and exits via RuvB. An RuvB hexamer assembles on each DNA strand where it exits the tetramer. Each RuvB hexamer is contacted by two RuvA subunits (via domain III) on 2 adjacent RuvB subunits; this complex drives branch migration. In the full resolvosome a probable DNA-RuvA(4)-RuvB(12)-RuvC(2) complex forms which resolves the HJ.

It is found in the cytoplasm. In terms of biological role, the RuvA-RuvB-RuvC complex processes Holliday junction (HJ) DNA during genetic recombination and DNA repair, while the RuvA-RuvB complex plays an important role in the rescue of blocked DNA replication forks via replication fork reversal (RFR). RuvA specifically binds to HJ cruciform DNA, conferring on it an open structure. The RuvB hexamer acts as an ATP-dependent pump, pulling dsDNA into and through the RuvAB complex. HJ branch migration allows RuvC to scan DNA until it finds its consensus sequence, where it cleaves and resolves the cruciform DNA. The polypeptide is Holliday junction branch migration complex subunit RuvA (Paracoccus denitrificans (strain Pd 1222)).